The primary structure comprises 318 residues: Ribose-phosphate pyrophosphokinase (318 aa).

Residues 43–45 and 102–103 contribute to the ATP site; these read DGE and RQ. Residues His-136 and Asp-176 each coordinate Mg(2+). Residue Lys-199 is part of the active site. Residues Arg-201, Asp-225, and 229 to 233 each bind D-ribose 5-phosphate; that span reads DTAGT.

The protein belongs to the ribose-phosphate pyrophosphokinase family. Class I subfamily. Homohexamer. The cofactor is Mg(2+).

The protein resides in the cytoplasm. It carries out the reaction D-ribose 5-phosphate + ATP = 5-phospho-alpha-D-ribose 1-diphosphate + AMP + H(+). It participates in metabolic intermediate biosynthesis; 5-phospho-alpha-D-ribose 1-diphosphate biosynthesis; 5-phospho-alpha-D-ribose 1-diphosphate from D-ribose 5-phosphate (route I): step 1/1. Involved in the biosynthesis of the central metabolite phospho-alpha-D-ribosyl-1-pyrophosphate (PRPP) via the transfer of pyrophosphoryl group from ATP to 1-hydroxyl of ribose-5-phosphate (Rib-5-P). The polypeptide is Ribose-phosphate pyrophosphokinase (Listeria ivanovii).